The following is a 620-amino-acid chain: Chaperone protein HtpG (620 aa).

The tract at residues 1-339 is a; substrate-binding; that stretch reads MAKHQFQTEI…SEDLPLNVSR (339 aa). Residues 340-546 form a b region; that stretch reads ELLQENRILA…ASDPMAGMAA (207 aa). The c stretch occupies residues 547–620; the sequence is MFAQMGQEMP…RVASLATKAL (74 aa).

This sequence belongs to the heat shock protein 90 family. As to quaternary structure, homodimer.

It localises to the cytoplasm. Its function is as follows. Molecular chaperone. Has ATPase activity. This is Chaperone protein HtpG from Sulfurovum sp. (strain NBC37-1).